A 168-amino-acid polypeptide reads, in one-letter code: Transcriptional repressor NrdR (168 aa).

A zinc finger lies at 3–34 (CPYCGFAQDRVVDSRESKEADSIRRRRECERC). Residues 49-139 (YMVVKKDGRR…VYRDFKDVNE (91 aa)) form the ATP-cone domain.

This sequence belongs to the NrdR family. The cofactor is Zn(2+).

Its function is as follows. Negatively regulates transcription of bacterial ribonucleotide reductase nrd genes and operons by binding to NrdR-boxes. The protein is Transcriptional repressor NrdR of Acidobacterium capsulatum (strain ATCC 51196 / DSM 11244 / BCRC 80197 / JCM 7670 / NBRC 15755 / NCIMB 13165 / 161).